The chain runs to 576 residues: 2-succinyl-5-enolpyruvyl-6-hydroxy-3-cyclohexene-1-carboxylate synthase (576 aa).

This sequence belongs to the TPP enzyme family. MenD subfamily. Homodimer. Mg(2+) is required as a cofactor. The cofactor is Mn(2+). Requires thiamine diphosphate as cofactor.

It catalyses the reaction isochorismate + 2-oxoglutarate + H(+) = 5-enolpyruvoyl-6-hydroxy-2-succinyl-cyclohex-3-ene-1-carboxylate + CO2. The protein operates within quinol/quinone metabolism; 1,4-dihydroxy-2-naphthoate biosynthesis; 1,4-dihydroxy-2-naphthoate from chorismate: step 2/7. It participates in quinol/quinone metabolism; menaquinone biosynthesis. Its function is as follows. Catalyzes the thiamine diphosphate-dependent decarboxylation of 2-oxoglutarate and the subsequent addition of the resulting succinic semialdehyde-thiamine pyrophosphate anion to isochorismate to yield 2-succinyl-5-enolpyruvyl-6-hydroxy-3-cyclohexene-1-carboxylate (SEPHCHC). This Photobacterium profundum (strain SS9) protein is 2-succinyl-5-enolpyruvyl-6-hydroxy-3-cyclohexene-1-carboxylate synthase.